Reading from the N-terminus, the 198-residue chain is Small ribosomal subunit protein uS4 (198 aa).

In terms of domain architecture, S4 RNA-binding spans 88–153; the sequence is LRLDNVMFRM…AQRYKDILEV (66 aa).

Belongs to the universal ribosomal protein uS4 family. Part of the 30S ribosomal subunit. Contacts protein S5. The interaction surface between S4 and S5 is involved in control of translational fidelity.

Its function is as follows. One of the primary rRNA binding proteins, it binds directly to 16S rRNA where it nucleates assembly of the body of the 30S subunit. Functionally, with S5 and S12 plays an important role in translational accuracy. The chain is Small ribosomal subunit protein uS4 from Lachnoclostridium phytofermentans (strain ATCC 700394 / DSM 18823 / ISDg) (Clostridium phytofermentans).